The chain runs to 183 residues: Peptide deformylase (183 aa).

Fe cation is bound by residues cysteine 110 and histidine 153. Residue glutamate 154 is part of the active site. Histidine 157 contributes to the Fe cation binding site.

This sequence belongs to the polypeptide deformylase family. The cofactor is Fe(2+).

The catalysed reaction is N-terminal N-formyl-L-methionyl-[peptide] + H2O = N-terminal L-methionyl-[peptide] + formate. In terms of biological role, removes the formyl group from the N-terminal Met of newly synthesized proteins. Requires at least a dipeptide for an efficient rate of reaction. N-terminal L-methionine is a prerequisite for activity but the enzyme has broad specificity at other positions. In Listeria monocytogenes serovar 1/2a (strain ATCC BAA-679 / EGD-e), this protein is Peptide deformylase.